A 657-amino-acid polypeptide reads, in one-letter code: N-acetylgalactosaminyltransferase 7 (657 aa).

Residues 1–6 (MRLKIG) lie on the Cytoplasmic side of the membrane. The helical; Signal-anchor for type II membrane protein transmembrane segment at 7–29 (FILRSLLVVGSFLGLVVLWSSLS) threads the bilayer. Residues 30–66 (SRPDDPSPLSRMREDRDVNNPLPNRGGNGLAPGDDRF) form a disordered region. Residues 30 to 657 (SRPDDPSPLS…KWEMNNIHSV (628 aa)) are Lumenal-facing. Intrachain disulfides connect cysteine 197/cysteine 435, cysteine 426/cysteine 507, cysteine 545/cysteine 562, cysteine 585/cysteine 600, and cysteine 625/cysteine 640. A catalytic subdomain A region spans residues 206-317 (LLTSSVVIVF…VNWYAPLVAP (112 aa)). The substrate site is built by aspartate 247 and arginine 277. Mn(2+) contacts are provided by aspartate 301 and histidine 303. Residues 381–443 (PYRSPAMAGG…PCSRVGHIYR (63 aa)) form a catalytic subdomain B region. Substrate is bound at residue tryptophan 412. A Mn(2+)-binding site is contributed by histidine 440. Residue arginine 443 coordinates substrate. A Ricin B-type lectin domain is found at 532–652 (VEWGEIRGLE…GKMTQKWEMN (121 aa)).

It belongs to the glycosyltransferase 2 family. GalNAc-T subfamily. It depends on Mn(2+) as a cofactor. As to expression, highly expressed in sublingual gland. Expressed at lower level in stomach, small intestiine and colon.

The protein localises to the golgi apparatus membrane. The enzyme catalyses L-seryl-[protein] + UDP-N-acetyl-alpha-D-galactosamine = a 3-O-[N-acetyl-alpha-D-galactosaminyl]-L-seryl-[protein] + UDP + H(+). It carries out the reaction L-threonyl-[protein] + UDP-N-acetyl-alpha-D-galactosamine = a 3-O-[N-acetyl-alpha-D-galactosaminyl]-L-threonyl-[protein] + UDP + H(+). Its pathway is protein modification; protein glycosylation. Functionally, glycopeptide transferase involved in O-linked oligosaccharide biosynthesis, which catalyzes the transfer of an N-acetyl-D-galactosamine residue to an already glycosylated peptide. In contrast to other proteins of the family, it does not act as a peptide transferase that transfers GalNAc onto serine or threonine residue on the protein receptor, but instead requires the prior addition of a GalNAc on a peptide before adding additional GalNAc moieties. Some peptide transferase activity is however not excluded, considering that its appropriate peptide substrate may remain unidentified. In Rattus norvegicus (Rat), this protein is N-acetylgalactosaminyltransferase 7 (Galnt7).